The chain runs to 158 residues: Large ribosomal subunit protein uL18 (158 aa).

It belongs to the universal ribosomal protein uL18 family. As to quaternary structure, part of the 50S ribosomal subunit. Contacts the 5S and 23S rRNAs.

Functionally, this is one of the proteins that bind and probably mediate the attachment of the 5S RNA into the large ribosomal subunit, where it forms part of the central protuberance. The chain is Large ribosomal subunit protein uL18 from Picrophilus torridus (strain ATCC 700027 / DSM 9790 / JCM 10055 / NBRC 100828 / KAW 2/3).